We begin with the raw amino-acid sequence, 220 residues long: Uracil-DNA glycosylase (220 aa).

Aspartate 61 acts as the Proton acceptor in catalysis.

It belongs to the uracil-DNA glycosylase (UDG) superfamily. UNG family.

Its subcellular location is the cytoplasm. It catalyses the reaction Hydrolyzes single-stranded DNA or mismatched double-stranded DNA and polynucleotides, releasing free uracil.. In terms of biological role, excises uracil residues from the DNA which can arise as a result of misincorporation of dUMP residues by DNA polymerase or due to deamination of cytosine. The chain is Uracil-DNA glycosylase from Glaesserella parasuis serovar 5 (strain SH0165) (Haemophilus parasuis).